Reading from the N-terminus, the 274-residue chain is Large ribosomal subunit protein uL2 (274 aa).

Disordered stretches follow at residues 28–55 (APHA…RHVG) and 224–274 (VAMN…RRRK). A compositionally biased stretch (basic and acidic residues) spans 263-274 (KRTDKMIVRRRK).

This sequence belongs to the universal ribosomal protein uL2 family. As to quaternary structure, part of the 50S ribosomal subunit. Forms a bridge to the 30S subunit in the 70S ribosome.

Functionally, one of the primary rRNA binding proteins. Required for association of the 30S and 50S subunits to form the 70S ribosome, for tRNA binding and peptide bond formation. It has been suggested to have peptidyltransferase activity; this is somewhat controversial. Makes several contacts with the 16S rRNA in the 70S ribosome. This is Large ribosomal subunit protein uL2 from Pseudomonas fluorescens (strain ATCC BAA-477 / NRRL B-23932 / Pf-5).